The primary structure comprises 504 residues: Serine O-succinyltransferase (504 aa).

The transit peptide at 1–26 (MLRASSKRLQLSWQVFRRFQSSNPQL) directs the protein to the mitochondrion. The tract at residues 49–70 (QACPNSVDPSASITSPSLSSGP) is disordered. Over residues 57–70 (PSASITSPSLSSGP) the composition is skewed to low complexity. Positions 117 to 395 (NAILLHTGLS…SAEEIIKLNE (279 aa)) constitute an AB hydrolase-1 domain. Residues 124–127 (GLSA) form an important for substrate specificity region. Ser221 (nucleophile) is an active-site residue. Position 290 (Arg290) interacts with substrate. Residues Asp443 and His480 contribute to the active site. Residue Asp481 participates in substrate binding.

It belongs to the AB hydrolase superfamily. MetX family.

The protein resides in the mitochondrion. The catalysed reaction is succinyl-CoA + L-serine = O-succinyl-L-serine + CoA. Its pathway is amino-acid biosynthesis; L-cysteine biosynthesis; L-cysteine from L-serine: step 1/2. Transfers a succinyl group from succinyl-CoA to L-serine, forming succinyl-L-serine. Also has weak serine acetyl transferase activity and homoserine succinyl transferase activity. The chain is Serine O-succinyltransferase from Schizosaccharomyces pombe (strain 972 / ATCC 24843) (Fission yeast).